The chain runs to 78 residues: Alpha-neurotoxin homolog 7 (78 aa).

The signal sequence occupies residues 1-21; the sequence is MKTLLLTLVVVTIVCLDFGYT. Disulfide bonds link Cys24-Cys42, Cys37-Cys57, Cys59-Cys70, and Cys71-Cys76.

It belongs to the three-finger toxin family. Short-chain subfamily. Orphan group XII sub-subfamily. In terms of tissue distribution, expressed by the venom gland.

The protein localises to the secreted. In Micrurus corallinus (Brazilian coral snake), this protein is Alpha-neurotoxin homolog 7.